A 1302-amino-acid polypeptide reads, in one-letter code: MVAITVQGAQLIKRVVERFYPGIAFDINEGACYIYKFSDHIRRIRMKHGTKYRRQAEEIMRSISLRKERLYGIPVLDEVEWKYVFDGQTFQSYAFEVYVNSILPWSELDPEEEFLRNYRVSRETTEVEKFIEFRAKNEMQIYGDIPIKVWCCFINELSIELNPIPLGMQVMADFVNRFNSPFHQGNRDLSNLEDFQVAYTTPLLFEMCCMESILEFNIKMRMREEDISALEFGDIKIDPVGLLREFFILCLPHPKKINNVLRAPYSWFVKMWGVGADPIVVLQSTAGDDRNSKDVFYDKFRTEPNRYKALFRSSFYNESRRMNEEKILEAVKYSQNLGSHDRRLPLFEKMLKMVYTTPFYPHKSSNMILASFLLSIQTITGYGRAWVKNVSTEFDKQLKPNPSNLVRDVSDLTREFFKQAYVEAKERREEMVKPEDLYTSMLRLARNTSSGFSTEIYVKKRFGPRLRDKDLVKINSRIKALVIFTKGHTVFTDEELHKKYNSVELYQTKGSRDVPIKATRTIYSINLSVLVPQLIVTLPLNEYFSRVGGITRPDYKKIGGKVIVGDLEATGSRVMDAADCFRNSADRDIFTIAIDYSEYDTHLTRHNFRTGMLQGIREAMAPYRALRYEGYTLEQIIDFGYGEGRVANTLWNGKRRLFKTTFDAYIRLDESERDKGSFKVPKGVLPVSSVDVANRIAVDKGFDTLIAATDGSDLALIDTHLSGENSTLIANSMHNMAIGTLIQRAVGREQPGILTFLSEQYVGDDTLFYTKLHTTDITVFDKVAASIFDTVAKCGHEASPSKTMMTPYSVEKTQTHAKQGCYVPQDRMMIISSERRKDIEDVQGYVRSQVQTMITKVSRGFCHDLAQLILMLKTTFIGAWKMKRTIKENAMYRDRKFDSNDEDGFTLIQIRNPLALYVPIGWNGYGAHPAALNIVMTEEMYVDSIMISKLDEIMAPIRRIVHDIPPCWNETQGDKRGLISATKLSFFSKMARPAVQAALSDPQIMNLVEELPLGEFSPGRISRTMMHSALLKESSAKALLSSGYRLEYQKALNGWIAQVSMRLGEESGVISTSYAKLFDVYFEGELDGAPYMFPDQNLSPQFYIQKMMIGPRVSSRVRNSYVDRIDVILRKDVVMRGFITANTILNVIEKLGTNHSVGDLVTVFTLMNIETRVAEELAEYMTSEKIRFDALKLLKKGIAGDEFTMSLNVATQDFIDTYLAYPYQLTKTEVDAISLYCTQMVMLRAALGLPKKKMKIVVTDDAKKRYKIRLQRFRTHVPKIKVLKKLIDPNRMTVRNLENQFV.

Residues 562–823 enclose the RdRp catalytic domain; that stretch reads VIVGDLEATG…QTHAKQGCYV (262 aa).

The protein belongs to the reoviridae RNA-directed RNA polymerase family.

It carries out the reaction RNA(n) + a ribonucleoside 5'-triphosphate = RNA(n+1) + diphosphate. The protein is RNA-directed RNA polymerase (Segment-1) of Antilocapra americana (Pronghorn).